A 561-amino-acid polypeptide reads, in one-letter code: Probable oligo-1,6-glucosidase 2 (561 aa).

Asp199 serves as the catalytic Nucleophile. Residue Glu255 is the Proton donor of the active site.

It belongs to the glycosyl hydrolase 13 family.

It is found in the cytoplasm. It catalyses the reaction Hydrolysis of (1-&gt;6)-alpha-D-glucosidic linkages in some oligosaccharides produced from starch and glycogen by alpha-amylase, and in isomaltose.. The sequence is that of Probable oligo-1,6-glucosidase 2 (ycdG) from Bacillus subtilis (strain 168).